A 314-amino-acid polypeptide reads, in one-letter code: 3'-5' exoribonuclease YhaM (314 aa).

Residues 163-279 enclose the HD domain; the sequence is HVVSMLDLAK…LHYIDNLDAK (117 aa).

This sequence belongs to the YhaM family.

Its function is as follows. Shows a 3'-5' exoribonuclease activity. The sequence is that of 3'-5' exoribonuclease YhaM from Bacillus thuringiensis (strain Al Hakam).